Consider the following 137-residue polypeptide: MASERVEKILEDLKALSLLEAAELVKGIEEVFGVKAEAPAGGGMMVMPGVMPGAPAAAAPAEPVEEQTEFTVMLEEVPADKKIAILKVAREITGLGLKEAKDLVEAAPKAVKEGVNKDDAATIKKKLEEAGAKASIK.

Belongs to the bacterial ribosomal protein bL12 family. Homodimer. Part of the ribosomal stalk of the 50S ribosomal subunit. Forms a multimeric L10(L12)X complex, where L10 forms an elongated spine to which 2 to 4 L12 dimers bind in a sequential fashion. Binds GTP-bound translation factors.

Functionally, forms part of the ribosomal stalk which helps the ribosome interact with GTP-bound translation factors. Is thus essential for accurate translation. This is Large ribosomal subunit protein bL12 from Gloeobacter violaceus (strain ATCC 29082 / PCC 7421).